Here is a 301-residue protein sequence, read N- to C-terminus: Glutamyl-Q tRNA(Asp) synthetase (301 aa).

Residues 8–12 (RFAPS) and glutamate 44 each bind L-glutamate. Positions 11–21 (PSPTGPLHFGS) match the 'HIGH' region motif. Zn(2+) contacts are provided by cysteine 100, cysteine 102, tyrosine 122, and cysteine 126. L-glutamate-binding residues include tyrosine 180 and arginine 198. Residues 236-240 (KLSKQ) carry the 'KMSKS' region motif. Lysine 239 contacts ATP.

The protein belongs to the class-I aminoacyl-tRNA synthetase family. GluQ subfamily. Requires Zn(2+) as cofactor.

Catalyzes the tRNA-independent activation of glutamate in presence of ATP and the subsequent transfer of glutamate onto a tRNA(Asp). Glutamate is transferred on the 2-amino-5-(4,5-dihydroxy-2-cyclopenten-1-yl) moiety of the queuosine in the wobble position of the QUC anticodon. The polypeptide is Glutamyl-Q tRNA(Asp) synthetase (Dechloromonas aromatica (strain RCB)).